The following is a 207-amino-acid chain: BTB/POZ domain-containing protein At1g01640 (207 aa).

Residues 24-94 (TDVLVKPGEE…LYSGNLKAPY (71 aa)) enclose the BTB domain.

As to quaternary structure, interacts with CUL3A.

The protein operates within protein modification; protein ubiquitination. May act as a substrate-specific adapter of an E3 ubiquitin-protein ligase complex (CUL3-RBX1-BTB) which mediates the ubiquitination and subsequent proteasomal degradation of target proteins. The protein is BTB/POZ domain-containing protein At1g01640 of Arabidopsis thaliana (Mouse-ear cress).